Consider the following 524-residue polypeptide: Chromosomal replication initiator protein DnaA (524 aa).

The domain I, interacts with DnaA modulators stretch occupies residues 1–73 (MELPESAWEQ…DELLSSADHH (73 aa)). Residues 73–187 (HPITSVEISV…DVEGGLQHKS (115 aa)) are domain II. 3 stretches are compositionally biased toward polar residues: residues 86–95 (RSTSFETNQG), 106–126 (APRQ…QPQQ), and 153–165 (NGYN…QPYN). Residues 86–173 (RSTSFETNQG…YNDNPMGQGK (88 aa)) are disordered. Residues 188 to 404 (NLNPTFIFDN…GALKRVIANA (217 aa)) are domain III, AAA+ region. The ATP site is built by glycine 232, glycine 234, lysine 235, and threonine 236. The tract at residues 405-524 (HFTGRDISVE…VKNLLRTLTT (120 aa)) is domain IV, binds dsDNA.

It belongs to the DnaA family. In terms of assembly, oligomerizes as a right-handed, spiral filament on DNA at oriC.

Its subcellular location is the cytoplasm. In terms of biological role, plays an essential role in the initiation and regulation of chromosomal replication. ATP-DnaA binds to the origin of replication (oriC) to initiate formation of the DNA replication initiation complex once per cell cycle. Binds the DnaA box (a 9 base pair repeat at the origin) and separates the double-stranded (ds)DNA. Forms a right-handed helical filament on oriC DNA; dsDNA binds to the exterior of the filament while single-stranded (ss)DNA is stabiized in the filament's interior. The ATP-DnaA-oriC complex binds and stabilizes one strand of the AT-rich DNA unwinding element (DUE), permitting loading of DNA polymerase. After initiation quickly degrades to an ADP-DnaA complex that is not apt for DNA replication. Binds acidic phospholipids. In Saccharophagus degradans (strain 2-40 / ATCC 43961 / DSM 17024), this protein is Chromosomal replication initiator protein DnaA.